The chain runs to 365 residues: tRNA/tmRNA (uracil-C(5))-methyltransferase (365 aa).

Q189, Y217, N222, E238, and D298 together coordinate S-adenosyl-L-methionine. C323 serves as the catalytic Nucleophile. The Proton acceptor role is filled by E357.

It belongs to the class I-like SAM-binding methyltransferase superfamily. RNA M5U methyltransferase family. TrmA subfamily.

It catalyses the reaction uridine(54) in tRNA + S-adenosyl-L-methionine = 5-methyluridine(54) in tRNA + S-adenosyl-L-homocysteine + H(+). The enzyme catalyses uridine(341) in tmRNA + S-adenosyl-L-methionine = 5-methyluridine(341) in tmRNA + S-adenosyl-L-homocysteine + H(+). Functionally, dual-specificity methyltransferase that catalyzes the formation of 5-methyluridine at position 54 (m5U54) in all tRNAs, and that of position 341 (m5U341) in tmRNA (transfer-mRNA). This Shewanella baltica (strain OS185) protein is tRNA/tmRNA (uracil-C(5))-methyltransferase.